The sequence spans 120 residues: MTRSFSPVVSLFLLLLQTICSATVENAADCAAVGTLISSCTEFVNYGYPDPIPGSSCCDAMTVIGTYSDSSEKRKWLCNCFMDLINVYNSNATAISTLSGFCGVVLGFTIDPNTDCNFIQ.

The first 22 residues, 1–22 (MTRSFSPVVSLFLLLLQTICSA), serve as a signal peptide directing secretion. 4 disulfide bridges follow: cysteine 30–cysteine 80, cysteine 40–cysteine 57, cysteine 58–cysteine 102, and cysteine 78–cysteine 116.

This sequence belongs to the plant LTP family.

Its function is as follows. Plant non-specific lipid-transfer proteins transfer phospholipids as well as galactolipids across membranes. May play a role in wax or cutin deposition in the cell walls of expanding epidermal cells and certain secretory tissues. This chain is Putative non-specific lipid-transfer protein 14 (LTP14), found in Arabidopsis thaliana (Mouse-ear cress).